A 438-amino-acid polypeptide reads, in one-letter code: MLKDFIKNTNILNILLAYSGGIDSTFLLYQLLKLKKNNLNFTFRAIHINHQLHPDSEKWSDHCKKICINHNIPIIIKKITINSNKNRIEEIARKKRYQAIYKIIKPKEVLATGHNLNDQCETMLLALKRGSGITGLSSMSYKLNTIYKIKIVRPLLKISREDIKTWIYKHKIHWIEDTSNNDTKHDRNFLRLNIIPKLKNRWPYFEKNCSRSIEILNIEKKILKQEIKKKLNKYLVLNSILNISNFRYIDKNICSIILRHWIKINQNTMPTFKIVKEIYNKVIFSKIDSQPKIIIKNYQIRRYNNHLYWTKKIPRIENIILIWNNTQKKLTLPFQLGNIVQNDFGTTLPHPNNNETINIRFYTSHKVLITKNTKHKKLKTIFKEYKLPPWYRKKIPLIFYNNKFICALGLFVSNTHKKSNNEKNLKLSWISSIHNIIV.

Position 19-24 (19-24 (SGGIDS)) interacts with ATP.

The protein belongs to the tRNA(Ile)-lysidine synthase family.

The protein localises to the cytoplasm. The enzyme catalyses cytidine(34) in tRNA(Ile2) + L-lysine + ATP = lysidine(34) in tRNA(Ile2) + AMP + diphosphate + H(+). Ligates lysine onto the cytidine present at position 34 of the AUA codon-specific tRNA(Ile) that contains the anticodon CAU, in an ATP-dependent manner. Cytidine is converted to lysidine, thus changing the amino acid specificity of the tRNA from methionine to isoleucine. The protein is tRNA(Ile)-lysidine synthase of Buchnera aphidicola subsp. Baizongia pistaciae (strain Bp).